Reading from the N-terminus, the 535-residue chain is Dual specificity calcium/calmodulin-dependent 3',5'-cyclic nucleotide phosphodiesterase 1A (535 aa).

Calmodulin-binding stretches follow at residues 24 to 44 (TEKM…QLER) and 114 to 137 (EKPK…MYRK). One can recognise a PDEase domain in the interval 142-522 (VGLAYPAAVI…ERWKELAAQE (381 aa)). His219 (proton donor) is an active-site residue. The Zn(2+) site is built by His223, His259, Asp260, and Asp366. Asp260 provides a ligand contact to Mg(2+).

This sequence belongs to the cyclic nucleotide phosphodiesterase family. PDE1 subfamily. Homodimer. Interacts with YWHAZ. Zn(2+) serves as cofactor. Requires Mg(2+) as cofactor. Several tissues, including brain, kidney, testes and heart.

It carries out the reaction a nucleoside 3',5'-cyclic phosphate + H2O = a nucleoside 5'-phosphate + H(+). It catalyses the reaction 3',5'-cyclic GMP + H2O = GMP + H(+). The enzyme catalyses 3',5'-cyclic AMP + H2O = AMP + H(+). Type I PDE are activated by the binding of calmodulin in the presence of Ca(2+). Functionally, calcium/calmodulin-dependent cyclic nucleotide phosphodiesterase with a dual specificity for the second messengers cGMP and cAMP, which are key regulators of many important physiological processes. Has a higher efficiency with cGMP compared to cAMP. This Homo sapiens (Human) protein is Dual specificity calcium/calmodulin-dependent 3',5'-cyclic nucleotide phosphodiesterase 1A.